A 432-amino-acid chain; its full sequence is Serine hydroxymethyltransferase 1 (432 aa).

Residues Leu131 and 135–137 (GHL) contribute to the (6S)-5,6,7,8-tetrahydrofolate site. Lys240 is modified (N6-(pyridoxal phosphate)lysine).

It belongs to the SHMT family. Homodimer. Pyridoxal 5'-phosphate is required as a cofactor.

The protein localises to the cytoplasm. It carries out the reaction (6R)-5,10-methylene-5,6,7,8-tetrahydrofolate + glycine + H2O = (6S)-5,6,7,8-tetrahydrofolate + L-serine. It functions in the pathway one-carbon metabolism; tetrahydrofolate interconversion. Its pathway is amino-acid biosynthesis; glycine biosynthesis; glycine from L-serine: step 1/1. Catalyzes the reversible interconversion of serine and glycine with tetrahydrofolate (THF) serving as the one-carbon carrier. This reaction serves as the major source of one-carbon groups required for the biosynthesis of purines, thymidylate, methionine, and other important biomolecules. Also exhibits THF-independent aldolase activity toward beta-hydroxyamino acids, producing glycine and aldehydes, via a retro-aldol mechanism. In Rhodopseudomonas palustris (strain ATCC BAA-98 / CGA009), this protein is Serine hydroxymethyltransferase 1.